The chain runs to 119 residues: NADH-quinone oxidoreductase subunit A (119 aa).

Helical transmembrane passes span 7 to 27, 63 to 83, and 88 to 108; these read FPVL…MTIG, LIAI…PWGV, and IGWP…VGFV.

Belongs to the complex I subunit 3 family. In terms of assembly, NDH-1 is composed of 14 different subunits. Subunits NuoA, H, J, K, L, M, N constitute the membrane sector of the complex.

It is found in the cell inner membrane. The catalysed reaction is a quinone + NADH + 5 H(+)(in) = a quinol + NAD(+) + 4 H(+)(out). NDH-1 shuttles electrons from NADH, via FMN and iron-sulfur (Fe-S) centers, to quinones in the respiratory chain. The immediate electron acceptor for the enzyme in this species is believed to be ubiquinone. Couples the redox reaction to proton translocation (for every two electrons transferred, four hydrogen ions are translocated across the cytoplasmic membrane), and thus conserves the redox energy in a proton gradient. In Ralstonia nicotianae (strain ATCC BAA-1114 / GMI1000) (Ralstonia solanacearum), this protein is NADH-quinone oxidoreductase subunit A.